The primary structure comprises 242 residues: 4-hydroxy-tetrahydrodipicolinate reductase (242 aa).

Residues 8–13 (GSNGRM), 75–77 (GTT), and 99–102 (ATNM) contribute to the NAD(+) site. The active-site Proton donor/acceptor is H131. H132 contacts (S)-2,3,4,5-tetrahydrodipicolinate. K135 (proton donor) is an active-site residue. 141–142 (GT) serves as a coordination point for (S)-2,3,4,5-tetrahydrodipicolinate.

Belongs to the DapB family.

It is found in the cytoplasm. The enzyme catalyses (S)-2,3,4,5-tetrahydrodipicolinate + NAD(+) + H2O = (2S,4S)-4-hydroxy-2,3,4,5-tetrahydrodipicolinate + NADH + H(+). It catalyses the reaction (S)-2,3,4,5-tetrahydrodipicolinate + NADP(+) + H2O = (2S,4S)-4-hydroxy-2,3,4,5-tetrahydrodipicolinate + NADPH + H(+). Its pathway is amino-acid biosynthesis; L-lysine biosynthesis via DAP pathway; (S)-tetrahydrodipicolinate from L-aspartate: step 4/4. Functionally, catalyzes the conversion of 4-hydroxy-tetrahydrodipicolinate (HTPA) to tetrahydrodipicolinate. The polypeptide is 4-hydroxy-tetrahydrodipicolinate reductase (Campylobacter lari (strain RM2100 / D67 / ATCC BAA-1060)).